Consider the following 730-residue polypeptide: ABC transporter G family member 3 (730 aa).

Residues 1-28 (MEEIQSQSDLYRSSSSSASSPTSRVPSS) show a composition bias toward low complexity. Residues 1 to 100 (MEEIQSQSDL…MASPPVPEGG (100 aa)) form a disordered region. Acidic residues predominate over residues 47–56 (DSPEWEDTPD). Over residues 72 to 91 (NDATTTPVSPSLSKMNSGSM) the composition is skewed to polar residues. S93 is subject to Phosphoserine. The 243-residue stretch at 114–356 (IAWKDLTVTM…FSNAGFPCPI (243 aa)) folds into the ABC transporter domain. 151 to 158 (GPAKSGKS) provides a ligand contact to ATP. Residues 441–653 (TRVAVLTWRS…SIEGLLENEY (213 aa)) form the ABC transmembrane type-2 domain. 6 helical membrane-spanning segments follow: residues 465 to 485 (LILYMILTLSIGTLYSGLGHS), 495 to 515 (AVFVFVSFASLLGIAGIPSLL), 532 to 552 (AFVFLLGQFLGSIPFLFLMSI), 575 to 595 (VLNFFMCLLVNEGLMLFIACI), 600 to 620 (YWSTLTLISVHVIMMLAAGHF), and 689 to 709 (MLVLLAMAFGYRLLVYVLLRF).

Belongs to the ABC transporter superfamily. ABCG family. Eye pigment precursor importer (TC 3.A.1.204) subfamily.

The protein localises to the membrane. This Arabidopsis thaliana (Mouse-ear cress) protein is ABC transporter G family member 3 (ABCG3).